The sequence spans 91 residues: Small ribosomal subunit protein uS15 (91 aa).

This sequence belongs to the universal ribosomal protein uS15 family. Part of the 30S ribosomal subunit. Forms a bridge to the 50S subunit in the 70S ribosome, contacting the 23S rRNA.

Its function is as follows. One of the primary rRNA binding proteins, it binds directly to 16S rRNA where it helps nucleate assembly of the platform of the 30S subunit by binding and bridging several RNA helices of the 16S rRNA. Functionally, forms an intersubunit bridge (bridge B4) with the 23S rRNA of the 50S subunit in the ribosome. This is Small ribosomal subunit protein uS15 from Rickettsia peacockii (strain Rustic).